The sequence spans 366 residues: Phosphoserine aminotransferase (366 aa).

Arg-42 contacts L-glutamate. Pyridoxal 5'-phosphate contacts are provided by residues 76–77 (AT), Trp-101, Thr-156, Asp-178, and Gln-201. Lys-202 is subject to N6-(pyridoxal phosphate)lysine. Residue 243 to 244 (NT) coordinates pyridoxal 5'-phosphate.

The protein belongs to the class-V pyridoxal-phosphate-dependent aminotransferase family. SerC subfamily. In terms of assembly, homodimer. Pyridoxal 5'-phosphate serves as cofactor.

The protein localises to the cytoplasm. The catalysed reaction is O-phospho-L-serine + 2-oxoglutarate = 3-phosphooxypyruvate + L-glutamate. It carries out the reaction 4-(phosphooxy)-L-threonine + 2-oxoglutarate = (R)-3-hydroxy-2-oxo-4-phosphooxybutanoate + L-glutamate. The protein operates within amino-acid biosynthesis; L-serine biosynthesis; L-serine from 3-phospho-D-glycerate: step 2/3. It participates in cofactor biosynthesis; pyridoxine 5'-phosphate biosynthesis; pyridoxine 5'-phosphate from D-erythrose 4-phosphate: step 3/5. Functionally, catalyzes the reversible conversion of 3-phosphohydroxypyruvate to phosphoserine and of 3-hydroxy-2-oxo-4-phosphonooxybutanoate to phosphohydroxythreonine. The protein is Phosphoserine aminotransferase of Aromatoleum aromaticum (strain DSM 19018 / LMG 30748 / EbN1) (Azoarcus sp. (strain EbN1)).